The primary structure comprises 120 residues: Holo-[acyl-carrier-protein] synthase (120 aa).

Mg(2+)-binding residues include Asp8 and Glu58.

It belongs to the P-Pant transferase superfamily. AcpS family. It depends on Mg(2+) as a cofactor.

It is found in the cytoplasm. It catalyses the reaction apo-[ACP] + CoA = holo-[ACP] + adenosine 3',5'-bisphosphate + H(+). In terms of biological role, transfers the 4'-phosphopantetheine moiety from coenzyme A to a Ser of acyl-carrier-protein. The sequence is that of Holo-[acyl-carrier-protein] synthase from Limosilactobacillus reuteri (strain DSM 20016) (Lactobacillus reuteri).